The following is a 401-amino-acid chain: ATP phosphoribosyltransferase regulatory subunit (401 aa).

Residues 373 to 401 (PGQQGGAAAQGCDRRLQQDDGGGWVTRPL) form a disordered region. The span at 392-401 (DGGGWVTRPL) shows a compositional bias: gly residues.

Belongs to the class-II aminoacyl-tRNA synthetase family. HisZ subfamily. Heteromultimer composed of HisG and HisZ subunits.

It is found in the cytoplasm. It functions in the pathway amino-acid biosynthesis; L-histidine biosynthesis; L-histidine from 5-phospho-alpha-D-ribose 1-diphosphate: step 1/9. Functionally, required for the first step of histidine biosynthesis. May allow the feedback regulation of ATP phosphoribosyltransferase activity by histidine. The polypeptide is ATP phosphoribosyltransferase regulatory subunit (Alkalilimnicola ehrlichii (strain ATCC BAA-1101 / DSM 17681 / MLHE-1)).